Here is a 237-residue protein sequence, read N- to C-terminus: Ribonuclease 3 (237 aa).

The RNase III domain maps to 6–133 (LIEVEKLIGI…VIAAVYLDKG (128 aa)). E46 lines the Mg(2+) pocket. The active site involves D50. The Mg(2+) site is built by D119 and E122. Residue E122 is part of the active site. The DRBM domain occupies 160–229 (DFKTRLQEVL…AKAALQRLGE (70 aa)).

Belongs to the ribonuclease III family. As to quaternary structure, homodimer. The cofactor is Mg(2+).

It localises to the cytoplasm. It catalyses the reaction Endonucleolytic cleavage to 5'-phosphomonoester.. Functionally, digests double-stranded RNA. Involved in the processing of primary rRNA transcript to yield the immediate precursors to the large and small rRNAs (23S and 16S). Processes some mRNAs, and tRNAs when they are encoded in the rRNA operon. Processes pre-crRNA and tracrRNA of type II CRISPR loci if present in the organism. This Clostridium perfringens (strain 13 / Type A) protein is Ribonuclease 3.